The primary structure comprises 540 residues: Phosphoenolpyruvate carboxykinase (ATP) (540 aa).

Arg65 lines the substrate pocket. Lys87 carries the post-translational modification N6-acetyllysine. Residues Tyr207 and Lys213 each coordinate substrate. Residues Lys213, His232, and 248–256 (GLSGTGKTT) contribute to the ATP site. Lys213 and His232 together coordinate Mn(2+). Asp269 provides a ligand contact to Mn(2+). Residues Glu297, Arg333, 449–450 (RI), and Thr455 contribute to the ATP site. Arg333 contributes to the substrate binding site. Lys523 is modified (N6-acetyllysine).

The protein belongs to the phosphoenolpyruvate carboxykinase (ATP) family. Monomer. Requires Mn(2+) as cofactor.

Its subcellular location is the cytoplasm. The enzyme catalyses oxaloacetate + ATP = phosphoenolpyruvate + ADP + CO2. Its pathway is carbohydrate biosynthesis; gluconeogenesis. Functionally, involved in the gluconeogenesis. Catalyzes the conversion of oxaloacetate (OAA) to phosphoenolpyruvate (PEP) through direct phosphoryl transfer between the nucleoside triphosphate and OAA. The chain is Phosphoenolpyruvate carboxykinase (ATP) from Escherichia coli O6:K15:H31 (strain 536 / UPEC).